Consider the following 566-residue polypeptide: E3 ubiquitin-protein ligase RNF220 (566 aa).

A Glycyl lysine isopeptide (Lys-Gly) (interchain with G-Cter in SUMO2) cross-link involves residue Lys277. Residues 277–297 (KREGESPTASPHSSATDDLHH) form a disordered region. Position 390 is a phosphoserine (Ser390). The stretch at 485–513 (EDSAVTTFEALKARVRELERQLSRGDRYK) forms a coiled coil. Residues 514 to 522 (CLICMDSYS) form a required for targeting to the cytoplasm region. The RING-type zinc finger occupies 514–553 (CLICMDSYSMPLTSIQCWHVHCEECWLRTLGAKKLCPQCN).

As to quaternary structure, interacts with SIN3B. Interacts with CTNNB1 (via Armadillo repeats 2-8). Interacts with USP7 (via MATH domain). Auto-ubiquitinated; leads to proteasomal degradation. In terms of tissue distribution, ubiquitously expressed. Abundant in brain and spinal cord, particularly in the cerebellum and cerebral cortex. In fetal tissues expressed in the cerebellum, spinal cord and cortex.

The protein localises to the cytoplasm. It localises to the nucleus. The catalysed reaction is S-ubiquitinyl-[E2 ubiquitin-conjugating enzyme]-L-cysteine + [acceptor protein]-L-lysine = [E2 ubiquitin-conjugating enzyme]-L-cysteine + N(6)-ubiquitinyl-[acceptor protein]-L-lysine.. Its pathway is protein modification; protein ubiquitination. Its function is as follows. E3 ubiquitin-protein ligase that promotes the ubiquitination and proteasomal degradation of SIN3B. Independently of its E3 ligase activity, acts as a CTNNB1 stabilizer through USP7-mediated deubiquitination of CTNNB1 promoting Wnt signaling. Plays a critical role in the regulation of nuclear lamina. This is E3 ubiquitin-protein ligase RNF220 (RNF220) from Homo sapiens (Human).